The chain runs to 439 residues: Cell division protein DivIB (439 aa).

2 disordered regions span residues 1–96 (MDDK…DSNI) and 119–149 (DNEQPQSAPKEQNSDSIDEETVTKKERKSKV). Topologically, residues 1-173 (MDDKTKNDQQ…RRKRQKRIQY (173 aa)) are cytoplasmic. The segment covering 11-20 (ESNEDKDELE) has biased composition (acidic residues). Residues 26-38 (TSKKRRQRKRSKA) show a composition bias toward basic residues. A compositionally biased stretch (basic and acidic residues) spans 64 to 76 (KDFKKEESNDKNN). Low complexity predominate over residues 77-86 (DSASSHANDN). Over residues 87–96 (NIDDSTDSNI) the composition is skewed to acidic residues. Residues 119 to 133 (DNEQPQSAPKEQNSD) are compositionally biased toward polar residues. A helical membrane pass occupies residues 174–194 (SVITILVLLIAVILIYMFSPL). The POTRA domain occupies 195–263 (SKIAHVNING…NTLNVDITEN (69 aa)). The Extracellular portion of the chain corresponds to 195-439 (SKIAHVNING…KINKQSSKNN (245 aa)). A disordered region spans residues 396–439 (YRGNTSSQSESDKNVTKSSQEENQAKEELQSVLNKINKQSSKNN). Residues 405 to 424 (ESDKNVTKSSQEENQAKEEL) show a composition bias toward basic and acidic residues. Residues 426–439 (SVLNKINKQSSKNN) are compositionally biased toward polar residues.

Belongs to the FtsQ/DivIB family. DivIB subfamily.

It localises to the cell membrane. In terms of biological role, cell division protein that may be involved in stabilizing or promoting the assembly of the division complex. This chain is Cell division protein DivIB, found in Staphylococcus aureus (strain NCTC 8325 / PS 47).